Reading from the N-terminus, the 478-residue chain is METARGRVLSVASECVPLLKTGGLADVVGALPGALAAEGWEMRVLMPCYRPLKWRLEEMEEVFAEEDLFGGPGRVMAGEVAGRKMLLLDAPHLYDREGGPYAGPDGDWGDNAQRFAALSWIGARIAREGLGDGWRPDVVHAHDWQAGFTPAYMNYWGSGGASSVLTVHNIAFQGWAPASLLSALRLPPQEFHPAALEYYGGLSSLKAGLVSADHITTVSPTYACELMRPEFGMGLQGVIAQRAGQVTGILNGVDTDIWSPEVEERPYDAESLKAKAENRAVLSGAFKLSVPGPLAILVSRLTYQKGIDLIPEVLPDFIAAGGGLAVLGTGDAPLEAAMRELEVRFPGRVGVRIGYDEGLSHLMFAGGDAVLVPSRFEPCGLTQMYGLRYGAIPVVALTGGLADTIINANPAAMAAGCATGLTFHPTEPPAFAEALRRLIHLYADPAAWETVQRNAMRHPVGWETSAAAYAALYRELVA.

K20 lines the ADP-alpha-D-glucose pocket.

It belongs to the glycosyltransferase 1 family. Bacterial/plant glycogen synthase subfamily.

It carries out the reaction [(1-&gt;4)-alpha-D-glucosyl](n) + ADP-alpha-D-glucose = [(1-&gt;4)-alpha-D-glucosyl](n+1) + ADP + H(+). It functions in the pathway glycan biosynthesis; glycogen biosynthesis. Synthesizes alpha-1,4-glucan chains using ADP-glucose. This is Glycogen synthase from Cereibacter sphaeroides (strain ATCC 17023 / DSM 158 / JCM 6121 / CCUG 31486 / LMG 2827 / NBRC 12203 / NCIMB 8253 / ATH 2.4.1.) (Rhodobacter sphaeroides).